A 229-amino-acid polypeptide reads, in one-letter code: 7-cyano-7-deazaguanine synthase (229 aa).

14–24 (LSGGQDSTTCL) is a binding site for ATP. Cys-192, Cys-200, Cys-203, and Cys-206 together coordinate Zn(2+).

Belongs to the QueC family. Zn(2+) is required as a cofactor.

It catalyses the reaction 7-carboxy-7-deazaguanine + NH4(+) + ATP = 7-cyano-7-deazaguanine + ADP + phosphate + H2O + H(+). The protein operates within purine metabolism; 7-cyano-7-deazaguanine biosynthesis. Its function is as follows. Catalyzes the ATP-dependent conversion of 7-carboxy-7-deazaguanine (CDG) to 7-cyano-7-deazaguanine (preQ(0)). The protein is 7-cyano-7-deazaguanine synthase of Laribacter hongkongensis (strain HLHK9).